Consider the following 385-residue polypeptide: Serine/threonine-protein kinase H2 (385 aa).

The Protein kinase domain maps to 63–320; it reads YDIKALIGTG…AGQALDHPWV (258 aa). ATP-binding positions include 69–77 and Lys92; that span reads IGTGSFSRV. The tract at residues 342 to 367 is disordered; sequence QRASPHSQSPGSAQSSKSHYSHKSRH. The span at 344–359 shows a compositional bias: low complexity; sequence ASPHSQSPGSAQSSKS.

It belongs to the protein kinase superfamily. CAMK Ser/Thr protein kinase family.

The enzyme catalyses L-seryl-[protein] + ATP = O-phospho-L-seryl-[protein] + ADP + H(+). It catalyses the reaction L-threonyl-[protein] + ATP = O-phospho-L-threonyl-[protein] + ADP + H(+). The sequence is that of Serine/threonine-protein kinase H2 (PSKH2) from Homo sapiens (Human).